A 55-amino-acid chain; its full sequence is MAEVAPAPAAAAPAKAPKKKAAAKPKKAGPSVGELIVKAVSASKERSGVSLAALK.

Residues 1–15 are compositionally biased toward low complexity; sequence MAEVAPAPAAAAPAK. The segment at 1–28 is disordered; that stretch reads MAEVAPAPAAAAPAKAPKKKAAAKPKKA. At alanine 2 the chain carries N-acetylalanine. Basic residues predominate over residues 16-27; it reads APKKKAAAKPKK. Positions 28–55 constitute an H15 domain; sequence AGPSVGELIVKAVSASKERSGVSLAALK.

This sequence belongs to the histone H1/H5 family.

Its subcellular location is the nucleus. The protein resides in the chromosome. It is found in the secreted. Histones H1 are necessary for the condensation of nucleosome chains into higher-order structures. Functionally, SAMP H1 has antibacterial activity against Gram-negative bacteria E.coli, A.salmonicida subsp salmonicida, V.anguillarum and S.typhimurium and Gram-positive bacteria B.subtilis and L.ivanovii. This chain is Histone H1, found in Salmo salar (Atlantic salmon).